The sequence spans 185 residues: MGLLSIIRKIKKKEKEMRILMVGLDNSGKTTIVLKINGEDTSVISPTLGFNIKTIIYQKYTLNIWDVGGQKTIRSYWRNYFEQTDGLVWVVDSSDLRRLDDCKMELDNLLKEERLAGSSLLILANKQDIQGALTPDEIGKVLNLESMDKSRHWKIVGCSAYTGEGLLEGFDWLVQDIASRIYMLD.

The N-myristoyl glycine moiety is linked to residue glycine 2. GTP is bound by residues 23–30, 66–70, and 125–128; these read GLDNSGKT, DVGGQ, and NKQD.

This sequence belongs to the small GTPase superfamily. Arf family. In terms of assembly, supercomplex made of cofactors A to E. Cofactors A and D function by capturing and stabilizing tubulin in a quasi-native conformation. Cofactor E binds to the cofactor D-tubulin complex; interaction with cofactor C then causes the release of tubulin polypeptides that are committed to the native state. As to expression, expressed in seedlings, leaves, roots and inflorescences.

It localises to the cytoplasm. In terms of biological role, has a role in the cofactor-dependent pathway of microtubule biogenesis. Not essential for cell viability. May play a regulatory role in sequestring TFCD. This is ADP-ribosylation factor-like protein 2 (ARL2) from Arabidopsis thaliana (Mouse-ear cress).